The primary structure comprises 500 residues: Phenylalanine--tRNA ligase alpha subunit (500 aa).

Residues Thr343, 382–384 (QID), and Phe423 each bind L-phenylalanine. Glu425 is a Mg(2+) binding site. Residue Phe448 coordinates L-phenylalanine.

It belongs to the class-II aminoacyl-tRNA synthetase family. Phe-tRNA synthetase alpha subunit type 2 subfamily. As to quaternary structure, tetramer of two alpha and two beta subunits. Requires Mg(2+) as cofactor.

The protein resides in the cytoplasm. The enzyme catalyses tRNA(Phe) + L-phenylalanine + ATP = L-phenylalanyl-tRNA(Phe) + AMP + diphosphate + H(+). The chain is Phenylalanine--tRNA ligase alpha subunit from Pyrococcus abyssi (strain GE5 / Orsay).